The chain runs to 775 residues: Zinc finger protein GLIS3 (775 aa).

Disordered regions lie at residues 121 to 147 (TESS…KKRA) and 282 to 314 (PGST…AHLH). The segment covering 123 to 133 (SSHSPYPSPRH) has biased composition (low complexity). The span at 134 to 147 (SSTRSHSARSKKRA) shows a compositional bias: basic residues. Residues 289–307 (PPAPPLPPLPPPPGPPPPY) are compositionally biased toward pro residues. The segment at 345–370 (HCCRWIDCSALYDQQEELVRHIEKVH) adopts a C2H2-type 1 zinc-finger fold. A C2H2-type 2; atypical zinc finger spans residues 379–406 (FTCFWAGCPRRYKPFNARYKLLIHMRVH). C2H2-type zinc fingers lie at residues 412–436 (NKCT…LRSH), 442–466 (YLCQ…QRTH), and 472–496 (YACQ…VKAH). 2 disordered regions span residues 485–512 (DPSS…SSTE) and 529–665 (PATS…QPNG). Residues 491-507 (KHVKAHSSKEQQARKKL) carry the Bipartite nuclear localization signal motif. Residues 497–512 (SSKEQQARKKLRSSTE) are compositionally biased toward basic and acidic residues. Polar residues-rich tracts occupy residues 557 to 567 (IFSSNYSSRSG), 588 to 600 (VQGS…SQLP), and 632 to 663 (SILQ…SFQP).

This sequence belongs to the GLI C2H2-type zinc-finger protein family. As to expression, in the adult, expressed at high levels in the kidney and at lower levels in the brain, skeletal muscle, pancreas, liver, lung, thymus and ovary.

The protein localises to the nucleus. Functionally, acts both as a repressor and an activator of transcription. Binds to the consensus sequence 5'-GACCACCCAC-3'. The sequence is that of Zinc finger protein GLIS3 (GLIS3) from Homo sapiens (Human).